The following is a 267-amino-acid chain: Tryptophan synthase alpha chain (267 aa).

Active-site proton acceptor residues include Glu49 and Asp60.

This sequence belongs to the TrpA family. As to quaternary structure, tetramer of two alpha and two beta chains.

It catalyses the reaction (1S,2R)-1-C-(indol-3-yl)glycerol 3-phosphate + L-serine = D-glyceraldehyde 3-phosphate + L-tryptophan + H2O. It functions in the pathway amino-acid biosynthesis; L-tryptophan biosynthesis; L-tryptophan from chorismate: step 5/5. Its function is as follows. The alpha subunit is responsible for the aldol cleavage of indoleglycerol phosphate to indole and glyceraldehyde 3-phosphate. The polypeptide is Tryptophan synthase alpha chain (Acinetobacter baumannii (strain AB307-0294)).